Consider the following 178-residue polypeptide: Conodipine-P3 (178 aa).

Positions 1–24 (MKLLAPVLWAMAALGVTWLVAVDS) are cleaved as a signal peptide. P38 carries the post-translational modification 4-hydroxyproline. Residues P42 and P49 each carry the 4-hydroxyproline; partial modification. Residue H54 is part of the active site. Residues 98 to 130 (KREVTSHRATSIAHSRLWKTALDQKSFLNRKAR) constitute a propeptide, interchain peptide. The residue at position 131 (Q131) is a Pyrrolidone carboxylic acid. P137 carries the 4-hydroxyproline; partial modification.

This sequence belongs to the phospholipase A2 family. Group IX subfamily. In terms of assembly, heterodimer of an alpha and a beta chain; probably disulfide-linked. The cofactor is Ca(2+). As to expression, expressed by the venom duct.

The protein resides in the secreted. The enzyme catalyses a 1,2-diacyl-sn-glycero-3-phosphocholine + H2O = a 1-acyl-sn-glycero-3-phosphocholine + a fatty acid + H(+). Its function is as follows. Catalyzes the calcium-dependent hydrolysis of the 2-acyl groups in 3-sn-phosphoglycerides. This chain is Conodipine-P3, found in Conus purpurascens (Purple cone).